Consider the following 362-residue polypeptide: Uracil-DNA glycosylase (362 aa).

The segment at 28 to 97 (ASVAPNDPTE…AGPTEDPNFA (70 aa)) is disordered. Asp205 functions as the Proton acceptor in the catalytic mechanism.

It belongs to the uracil-DNA glycosylase (UDG) superfamily. UNG family.

Its subcellular location is the host nucleus. The enzyme catalyses Hydrolyzes single-stranded DNA or mismatched double-stranded DNA and polynucleotides, releasing free uracil.. Functionally, excises uracil residues from the DNA which can arise as a result of misincorporation of dUMP residues by DNA polymerase or deamination of cytosines. Therefore may reduce deleterious uracil incorporation into the viral genome, particularly in terminally differentiated cells which lack DNA repair enzymes. The polypeptide is Uracil-DNA glycosylase (UL2) (Psittacid herpesvirus 1 (isolate Amazon parrot/-/97-0001/1997) (PsHV-1)).